A 184-amino-acid polypeptide reads, in one-letter code: ATP synthase subunit b 1 (184 aa).

A helical membrane pass occupies residues 4–24 (LSILAALAASPAMAATGPFFS).

The protein belongs to the ATPase B chain family. As to quaternary structure, F-type ATPases have 2 components, F(1) - the catalytic core - and F(0) - the membrane proton channel. F(1) has five subunits: alpha(3), beta(3), gamma(1), delta(1), epsilon(1). F(0) has three main subunits: a(1), b(2) and c(10-14). The alpha and beta chains form an alternating ring which encloses part of the gamma chain. F(1) is attached to F(0) by a central stalk formed by the gamma and epsilon chains, while a peripheral stalk is formed by the delta and b chains.

The protein localises to the cell inner membrane. F(1)F(0) ATP synthase produces ATP from ADP in the presence of a proton or sodium gradient. F-type ATPases consist of two structural domains, F(1) containing the extramembraneous catalytic core and F(0) containing the membrane proton channel, linked together by a central stalk and a peripheral stalk. During catalysis, ATP synthesis in the catalytic domain of F(1) is coupled via a rotary mechanism of the central stalk subunits to proton translocation. In terms of biological role, component of the F(0) channel, it forms part of the peripheral stalk, linking F(1) to F(0). The polypeptide is ATP synthase subunit b 1 (Cereibacter sphaeroides (strain ATCC 17025 / ATH 2.4.3) (Rhodobacter sphaeroides)).